We begin with the raw amino-acid sequence, 156 residues long: Small ribosomal subunit protein uS7 (156 aa).

The protein belongs to the universal ribosomal protein uS7 family. In terms of assembly, part of the 30S ribosomal subunit. Contacts proteins S9 and S11.

Functionally, one of the primary rRNA binding proteins, it binds directly to 16S rRNA where it nucleates assembly of the head domain of the 30S subunit. Is located at the subunit interface close to the decoding center, probably blocks exit of the E-site tRNA. The protein is Small ribosomal subunit protein uS7 of Chelativorans sp. (strain BNC1).